We begin with the raw amino-acid sequence, 540 residues long: Chaperonin GroEL 1 (540 aa).

ATP contacts are provided by residues Thr-30–Pro-33, Lys-51, Asp-87–Thr-91, Gly-415, Asn-480–Ala-482, and Asp-496.

This sequence belongs to the chaperonin (HSP60) family. As to quaternary structure, forms a cylinder of 14 subunits composed of two heptameric rings stacked back-to-back. Interacts with the co-chaperonin GroES.

The protein localises to the cytoplasm. It catalyses the reaction ATP + H2O + a folded polypeptide = ADP + phosphate + an unfolded polypeptide.. Its function is as follows. Together with its co-chaperonin GroES, plays an essential role in assisting protein folding. The GroEL-GroES system forms a nano-cage that allows encapsulation of the non-native substrate proteins and provides a physical environment optimized to promote and accelerate protein folding. In Bradyrhizobium diazoefficiens (strain JCM 10833 / BCRC 13528 / IAM 13628 / NBRC 14792 / USDA 110), this protein is Chaperonin GroEL 1.